We begin with the raw amino-acid sequence, 282 residues long: Protoheme IX farnesyltransferase (282 aa).

Helical transmembrane passes span 9-29, 39-59, 79-99, 102-122, 139-159, 165-185, 210-230, 231-251, and 261-281; these read LAKP…FLLA, LPLF…GCVF, LVTG…LLIL, LVLY…GFIV, VLGG…VVNI, LALF…IAML, IMLF…VLGS, ADLF…YKSI, and VFAK…CLTM.

Belongs to the UbiA prenyltransferase family. Protoheme IX farnesyltransferase subfamily.

The protein localises to the cell inner membrane. It carries out the reaction heme b + (2E,6E)-farnesyl diphosphate + H2O = Fe(II)-heme o + diphosphate. Its pathway is porphyrin-containing compound metabolism; heme O biosynthesis; heme O from protoheme: step 1/1. Its function is as follows. Converts heme B (protoheme IX) to heme O by substitution of the vinyl group on carbon 2 of heme B porphyrin ring with a hydroxyethyl farnesyl side group. The sequence is that of Protoheme IX farnesyltransferase from Francisella tularensis subsp. tularensis (strain FSC 198).